Here is a 113-residue protein sequence, read N- to C-terminus: Probable leucocin-A immunity protein (113 aa).

Belongs to the immunity protein EntA family.

In terms of biological role, imparts immunity to leucocin-A to naturally sensitive host strains. The protein is Probable leucocin-A immunity protein of Leuconostoc gelidum.